We begin with the raw amino-acid sequence, 403 residues long: Phosphopentomutase (403 aa).

Mn(2+) contacts are provided by Asp-13, Asp-298, His-303, Asp-339, His-340, and His-351.

Belongs to the phosphopentomutase family. Mn(2+) is required as a cofactor.

The protein resides in the cytoplasm. It catalyses the reaction 2-deoxy-alpha-D-ribose 1-phosphate = 2-deoxy-D-ribose 5-phosphate. The catalysed reaction is alpha-D-ribose 1-phosphate = D-ribose 5-phosphate. It functions in the pathway carbohydrate degradation; 2-deoxy-D-ribose 1-phosphate degradation; D-glyceraldehyde 3-phosphate and acetaldehyde from 2-deoxy-alpha-D-ribose 1-phosphate: step 1/2. Isomerase that catalyzes the conversion of deoxy-ribose 1-phosphate (dRib-1-P) and ribose 1-phosphate (Rib-1-P) to deoxy-ribose 5-phosphate (dRib-5-P) and ribose 5-phosphate (Rib-5-P), respectively. The chain is Phosphopentomutase from Streptococcus pyogenes serotype M4 (strain MGAS10750).